The chain runs to 150 residues: D-aminoacyl-tRNA deacylase (150 aa).

The Gly-cisPro motif, important for rejection of L-amino acids motif lies at 136 to 137 (GP).

It belongs to the DTD family. In terms of assembly, homodimer.

The protein resides in the cytoplasm. It carries out the reaction glycyl-tRNA(Ala) + H2O = tRNA(Ala) + glycine + H(+). It catalyses the reaction a D-aminoacyl-tRNA + H2O = a tRNA + a D-alpha-amino acid + H(+). An aminoacyl-tRNA editing enzyme that deacylates mischarged D-aminoacyl-tRNAs. Also deacylates mischarged glycyl-tRNA(Ala), protecting cells against glycine mischarging by AlaRS. Acts via tRNA-based rather than protein-based catalysis; rejects L-amino acids rather than detecting D-amino acids in the active site. By recycling D-aminoacyl-tRNA to D-amino acids and free tRNA molecules, this enzyme counteracts the toxicity associated with the formation of D-aminoacyl-tRNA entities in vivo and helps enforce protein L-homochirality. The chain is D-aminoacyl-tRNA deacylase from Staphylococcus haemolyticus (strain JCSC1435).